The primary structure comprises 102 residues: Small ribosomal subunit protein uS10 (102 aa).

This sequence belongs to the universal ribosomal protein uS10 family. In terms of assembly, part of the 30S ribosomal subunit.

Functionally, involved in the binding of tRNA to the ribosomes. The polypeptide is Small ribosomal subunit protein uS10 (Shouchella clausii (strain KSM-K16) (Alkalihalobacillus clausii)).